We begin with the raw amino-acid sequence, 105 residues long: Precursor of CEP15 (105 aa).

Positions 1 to 29 are cleaved as a signal peptide; that stretch reads MDATKIKFDVILLSFLLIISGIPSNLGLS. Residues 30-90 constitute a propeptide that is removed on maturation; that stretch reads TSVRGTTRSE…PSPPVPDYDD (61 aa). The segment covering 68–80 has biased composition (low complexity); it reads DYYDGGSSSSTTS. The segment at 68–105 is disordered; it reads DYYDGGSSSSTTSPSPPVPDYDDIYRRQGDVPSPGIGH. 2 positions are modified to hydroxyproline: proline 99 and proline 101.

This sequence belongs to the C-terminally encoded plant signaling peptide (CEP) family. As to quaternary structure, interacts with CEP receptors (e.g. CEPR1 and CEPR2). Post-translationally, the mature small signaling peptide is generated by proteolytic processing of the longer precursor.

The protein resides in the secreted. Its subcellular location is the extracellular space. It is found in the apoplast. Its function is as follows. Extracellular signaling peptide that may regulate primary root growth rate and systemic nitrogen (N)-demand signaling. The chain is Precursor of CEP15 from Arabidopsis thaliana (Mouse-ear cress).